The sequence spans 94 residues: Small ubiquitin-related modifier 3 (94 aa).

A Glycyl lysine isopeptide (Lys-Gly) (interchain with G-Cter in SUMO) cross-link involves residue K11. The Ubiquitin-like domain occupies 15–92 (DHINLKVAGQ…IDVFQQQTGG (78 aa)). A Glycyl lysine isopeptide (Gly-Lys) (interchain with K-? in acceptor proteins) cross-link involves residue G92. The propeptide occupies 93-94 (VC).

It belongs to the ubiquitin family. SUMO subfamily. Interacts with sae2 and ube2i. Covalently attached to a number of proteins. Post-translationally, polymeric chains can be formed through Lys-11 cross-linking. In terms of processing, cleavage of precursor form by a sentrin-specific protease is necessary for function.

It is found in the cytoplasm. It localises to the nucleus. The protein localises to the PML body. In terms of biological role, ubiquitin-like protein which can be covalently attached to target lysines either as a monomer or as a lysine-linked polymer. Does not seem to be involved in protein degradation and may function as an antagonist of ubiquitin in the degradation process. Plays a role in a number of cellular processes such as nuclear transport, DNA replication and repair, mitosis and signal transduction. Covalent attachment to its substrates requires prior activation by the E1 complex sae1-sae2 and linkage to the E2 enzyme ube2i. The protein is Small ubiquitin-related modifier 3 (sumo3) of Xenopus laevis (African clawed frog).